A 266-amino-acid chain; its full sequence is MASVFGKPRAGGGQQSAPLEVNLAILGRRGAGKSALTVKFLTRRFISEYDPNLEDTYSSEETVDHQPVHLRVMDTADLDTPRNCERYLNWAHAFLVVYSVDSRQSFEGSSSYLELLALHAKETQRSFPALLLGNKLDMAQYRQVTQAEGAALAGRFGCLFFEVSACLDFEHVQHVFHEAVREARRELEKNSLARPLFISEERAVHHQAPLTARHGLASCTFNTLSTTSLKEMPAVAQAKLVTVKSSRAQSKRKAPTLTLLKGFKIF.

GTP contacts are provided by residues 27–34, 74–78, and 134–137; these read GRRGAGKS, DTADL, and NKLD.

Belongs to the small GTPase superfamily. Ras family.

It carries out the reaction GTP + H2O = GDP + phosphate + H(+). The chain is Ras-like protein family member 12 (RASL12) from Bos taurus (Bovine).